A 465-amino-acid chain; its full sequence is Opioid growth factor receptor-like protein 1 (465 aa).

2 disordered regions span residues 1 to 89 (MGNL…GNAK) and 309 to 465 (ENFI…TSSG). 4 stretches are compositionally biased toward basic and acidic residues: residues 48–59 (REQPEQPPERAG), 316–325 (PKKEQPERSK), 363–396 (TVEE…RNSE), and 426–440 (SEKD…KDSE). Residues 442-465 (PENTSCHAEVVSQQNVTNPQTSSG) are compositionally biased toward polar residues.

The protein belongs to the opioid growth factor receptor family.

In Rattus norvegicus (Rat), this protein is Opioid growth factor receptor-like protein 1 (Ogfrl1).